A 216-amino-acid polypeptide reads, in one-letter code: Uracil phosphoribosyltransferase (216 aa).

Residues Arg85, Arg110, and 135–143 (DPMVATGYS) each bind 5-phospho-alpha-D-ribose 1-diphosphate. Uracil is bound by residues Ile200 and 205-207 (GDA). Asp206 lines the 5-phospho-alpha-D-ribose 1-diphosphate pocket.

The protein belongs to the UPRTase family. The cofactor is Mg(2+).

It catalyses the reaction UMP + diphosphate = 5-phospho-alpha-D-ribose 1-diphosphate + uracil. Its pathway is pyrimidine metabolism; UMP biosynthesis via salvage pathway; UMP from uracil: step 1/1. Its activity is regulated as follows. Allosterically activated by GTP. Functionally, catalyzes the conversion of uracil and 5-phospho-alpha-D-ribose 1-diphosphate (PRPP) to UMP and diphosphate. The chain is Uracil phosphoribosyltransferase from Burkholderia ambifaria (strain MC40-6).